The primary structure comprises 469 residues: 3-isopropylmalate dehydratase large subunit (469 aa).

[4Fe-4S] cluster is bound by residues C347, C410, and C413.

The protein belongs to the aconitase/IPM isomerase family. LeuC type 1 subfamily. In terms of assembly, heterodimer of LeuC and LeuD. Requires [4Fe-4S] cluster as cofactor.

The enzyme catalyses (2R,3S)-3-isopropylmalate = (2S)-2-isopropylmalate. The protein operates within amino-acid biosynthesis; L-leucine biosynthesis; L-leucine from 3-methyl-2-oxobutanoate: step 2/4. Its function is as follows. Catalyzes the isomerization between 2-isopropylmalate and 3-isopropylmalate, via the formation of 2-isopropylmaleate. This Burkholderia mallei (strain NCTC 10247) protein is 3-isopropylmalate dehydratase large subunit.